The primary structure comprises 469 residues: Uronate isomerase (469 aa).

The protein belongs to the metallo-dependent hydrolases superfamily. Uronate isomerase family.

It catalyses the reaction D-glucuronate = D-fructuronate. The catalysed reaction is aldehydo-D-galacturonate = keto-D-tagaturonate. Its pathway is carbohydrate metabolism; pentose and glucuronate interconversion. The sequence is that of Uronate isomerase from Mesorhizobium japonicum (strain LMG 29417 / CECT 9101 / MAFF 303099) (Mesorhizobium loti (strain MAFF 303099)).